A 1171-amino-acid polypeptide reads, in one-letter code: WD repeat-containing protein on Y chromosome (1171 aa).

WD repeat units follow at residues 157-201 (EIPE…LRSA), 331-370 (RIPL…EPSA), 374-413 (GHNG…LLQT), 464-503 (THAA…RKII), 516-555 (IIDI…VVRN), 603-643 (FHTD…RRYN), 748-787 (KVGD…IPQA), and 831-870 (GHLK…LGTL). A disordered region spans residues 1076 to 1171 (RTSFTLSDYT…TNTMKSSNSH (96 aa)). 2 stretches are compositionally biased toward polar residues: residues 1094–1106 (SSRN…SSGS) and 1161–1171 (KTNTMKSSNSH).

The protein is WD repeat-containing protein on Y chromosome of Drosophila grimshawi (Hawaiian fruit fly).